Reading from the N-terminus, the 429-residue chain is Enolase (429 aa).

A (2R)-2-phosphoglycerate-binding site is contributed by Gln166. The active-site Proton donor is Glu208. The Mg(2+) site is built by Asp245, Glu289, and Asp316. Residues Lys341, Arg370, Ser371, and Lys392 each coordinate (2R)-2-phosphoglycerate. The active-site Proton acceptor is the Lys341.

Belongs to the enolase family. As to quaternary structure, component of the RNA degradosome, a multiprotein complex involved in RNA processing and mRNA degradation. It depends on Mg(2+) as a cofactor.

The protein localises to the cytoplasm. The protein resides in the secreted. It is found in the cell surface. It carries out the reaction (2R)-2-phosphoglycerate = phosphoenolpyruvate + H2O. It functions in the pathway carbohydrate degradation; glycolysis; pyruvate from D-glyceraldehyde 3-phosphate: step 4/5. Catalyzes the reversible conversion of 2-phosphoglycerate (2-PG) into phosphoenolpyruvate (PEP). It is essential for the degradation of carbohydrates via glycolysis. The sequence is that of Enolase from Acinetobacter baumannii (strain AB307-0294).